The sequence spans 340 residues: Quinic acid degradation cluster protein x (340 aa).

Residues glutamate 90, aspartate 115, leucine 117, aspartate 118, and aspartate 262 each contribute to the Mg(2+) site. Glutamate 90 contributes to the substrate binding site. Residues 117–120 (LDGT) and aspartate 262 contribute to the substrate site.

The protein belongs to the inositol monophosphatase superfamily.

Its function is as follows. Part of the qa gene cluster that mediates the catabolism of quinic acid (QA) and as such, allows the use of QA as a sole carbon source. Its function within the pathway has not been determined yet but it probably plays a regulatory role. The qa cluster encodes 3 inducible enymes (qa-2, qa-3 and qa-4) catalyzing the first three reactions in the catabolism of quinic acid to protocatechuic acid (also known as 3,4-Dihydroxybenzoic acid). The chain is Quinic acid degradation cluster protein x from Neurospora crassa (strain ATCC 24698 / 74-OR23-1A / CBS 708.71 / DSM 1257 / FGSC 987).